The following is a 161-amino-acid chain: Allophycocyanin beta chain (161 aa).

Asparagine 71 carries the post-translational modification N4-methylasparagine. Cysteine 81 contacts (2R,3E)-phycocyanobilin.

The protein belongs to the phycobiliprotein family. Heterodimer of an alpha and a beta chain. Contains one covalently linked phycocyanobilin chromophore.

The protein localises to the cellular thylakoid membrane. Functionally, light-harvesting photosynthetic bile pigment-protein from the phycobiliprotein complex. Allophycocyanin has a maximum absorption at approximately 650 nanometers. The protein is Allophycocyanin beta chain (apcB) of Synechocystis sp. (strain ATCC 27184 / PCC 6803 / Kazusa).